Reading from the N-terminus, the 435-residue chain is 3-phosphoshikimate 1-carboxyvinyltransferase (435 aa).

K15, S16, and R20 together coordinate 3-phosphoshikimate. K15 provides a ligand contact to phosphoenolpyruvate. G96 and R124 together coordinate phosphoenolpyruvate. Positions 169, 171, 195, 319, and 346 each coordinate 3-phosphoshikimate. Q171 is a phosphoenolpyruvate binding site. Residue D319 is the Proton acceptor of the active site. Residues R350 and R394 each coordinate phosphoenolpyruvate.

It belongs to the EPSP synthase family. In terms of assembly, monomer.

The protein resides in the cytoplasm. It catalyses the reaction 3-phosphoshikimate + phosphoenolpyruvate = 5-O-(1-carboxyvinyl)-3-phosphoshikimate + phosphate. It functions in the pathway metabolic intermediate biosynthesis; chorismate biosynthesis; chorismate from D-erythrose 4-phosphate and phosphoenolpyruvate: step 6/7. Catalyzes the transfer of the enolpyruvyl moiety of phosphoenolpyruvate (PEP) to the 5-hydroxyl of shikimate-3-phosphate (S3P) to produce enolpyruvyl shikimate-3-phosphate and inorganic phosphate. The protein is 3-phosphoshikimate 1-carboxyvinyltransferase of Chloroherpeton thalassium (strain ATCC 35110 / GB-78).